A 405-amino-acid chain; its full sequence is Magnesium-protoporphyrin IX monomethyl ester [oxidative] cyclase, chloroplastic (405 aa).

Residues 1–43 (MATEMALVKPISKFSTSSPIFSNSRYGKFTTVRMSSTSQSTTK) constitute a chloroplast transit peptide.

This sequence belongs to the AcsF family. Requires Fe cation as cofactor.

The protein localises to the plastid. Its subcellular location is the chloroplast. The enzyme catalyses Mg-protoporphyrin IX 13-monomethyl ester + 3 NADPH + 3 O2 + 2 H(+) = 3,8-divinyl protochlorophyllide a + 3 NADP(+) + 5 H2O. Its pathway is porphyrin-containing compound metabolism; chlorophyll biosynthesis. In terms of biological role, catalyzes the formation of the isocyclic ring in chlorophyll biosynthesis. Mediates the cyclase reaction, which results in the formation of divinylprotochlorophyllide (Pchlide) characteristic of all chlorophylls from magnesium-protoporphyrin IX 13-monomethyl ester (MgPMME). This chain is Magnesium-protoporphyrin IX monomethyl ester [oxidative] cyclase, chloroplastic (CRD1), found in Gossypium hirsutum (Upland cotton).